The sequence spans 466 residues: Membrane-bound lytic murein transglycosylase F (466 aa).

A signal peptide spans 1-24 (MKRFKLNYFIIGLIAILLTWSLWT). The tract at residues 25 to 268 (TVPWRNAHQD…RLEEKYLGHV (244 aa)) is non-LT domain. Positions 269–466 (GGFDYVDTKT…KEKKAAQLAD (198 aa)) are LT domain. Residue Glu313 is part of the active site.

The protein in the N-terminal section; belongs to the bacterial solute-binding protein 3 family. In the C-terminal section; belongs to the transglycosylase Slt family.

The protein resides in the cell outer membrane. The enzyme catalyses Exolytic cleavage of the (1-&gt;4)-beta-glycosidic linkage between N-acetylmuramic acid (MurNAc) and N-acetylglucosamine (GlcNAc) residues in peptidoglycan, from either the reducing or the non-reducing ends of the peptidoglycan chains, with concomitant formation of a 1,6-anhydrobond in the MurNAc residue.. In terms of biological role, murein-degrading enzyme that degrades murein glycan strands and insoluble, high-molecular weight murein sacculi, with the concomitant formation of a 1,6-anhydromuramoyl product. Lytic transglycosylases (LTs) play an integral role in the metabolism of the peptidoglycan (PG) sacculus. Their lytic action creates space within the PG sacculus to allow for its expansion as well as for the insertion of various structures such as secretion systems and flagella. The sequence is that of Membrane-bound lytic murein transglycosylase F from Sodalis glossinidius (strain morsitans).